The following is a 436-amino-acid chain: 3-ketoacyl-CoA thiolase (436 aa).

Catalysis depends on Cys99, which acts as the Acyl-thioester intermediate. Residues His392 and Cys422 each act as proton acceptor in the active site.

It belongs to the thiolase-like superfamily. Thiolase family. In terms of assembly, heterotetramer of two alpha chains (FadJ) and two beta chains (FadI).

The protein resides in the cytoplasm. It carries out the reaction an acyl-CoA + acetyl-CoA = a 3-oxoacyl-CoA + CoA. It functions in the pathway lipid metabolism; fatty acid beta-oxidation. Catalyzes the final step of fatty acid oxidation in which acetyl-CoA is released and the CoA ester of a fatty acid two carbons shorter is formed. The protein is 3-ketoacyl-CoA thiolase of Salmonella schwarzengrund (strain CVM19633).